Reading from the N-terminus, the 181-residue chain is Adenine phosphoribosyltransferase (181 aa).

The protein belongs to the purine/pyrimidine phosphoribosyltransferase family. In terms of assembly, homodimer.

Its subcellular location is the cytoplasm. The enzyme catalyses AMP + diphosphate = 5-phospho-alpha-D-ribose 1-diphosphate + adenine. It functions in the pathway purine metabolism; AMP biosynthesis via salvage pathway; AMP from adenine: step 1/1. In terms of biological role, catalyzes a salvage reaction resulting in the formation of AMP, that is energically less costly than de novo synthesis. This chain is Adenine phosphoribosyltransferase, found in Methylobacterium nodulans (strain LMG 21967 / CNCM I-2342 / ORS 2060).